The primary structure comprises 244 residues: 5-oxoprolinase subunit A (244 aa).

Belongs to the LamB/PxpA family. Forms a complex composed of PxpA, PxpB and PxpC.

The enzyme catalyses 5-oxo-L-proline + ATP + 2 H2O = L-glutamate + ADP + phosphate + H(+). In terms of biological role, catalyzes the cleavage of 5-oxoproline to form L-glutamate coupled to the hydrolysis of ATP to ADP and inorganic phosphate. The sequence is that of 5-oxoprolinase subunit A from Salmonella choleraesuis (strain SC-B67).